The sequence spans 173 residues: Bifunctional protein PyrR (173 aa).

A PRPP-binding motif is present at residues valine 93 to threonine 105.

Belongs to the purine/pyrimidine phosphoribosyltransferase family. PyrR subfamily. In terms of assembly, homodimer and homohexamer; in equilibrium.

It carries out the reaction UMP + diphosphate = 5-phospho-alpha-D-ribose 1-diphosphate + uracil. Regulates transcriptional attenuation of the pyrimidine nucleotide (pyr) operon by binding in a uridine-dependent manner to specific sites on pyr mRNA. This disrupts an antiterminator hairpin in the RNA and favors formation of a downstream transcription terminator, leading to a reduced expression of downstream genes. Its function is as follows. Also displays a weak uracil phosphoribosyltransferase activity which is not physiologically significant. The polypeptide is Bifunctional protein PyrR (Streptococcus pyogenes serotype M49 (strain NZ131)).